The primary structure comprises 265 residues: Very long chain fatty acid elongase 6 (265 aa).

An N-linked (GlcNAc...) asparagine glycan is attached at N2. The next 7 membrane-spanning stretches (helical) occupy residues 34–51, 70–90, 111–131, 136–156, 159–179, 197–217, and 232–252; these read FLFSALYAAFIFGGRHLM, LAVFSIFGALRTGAYMVYILM, FWAYAFVLSKAPELGDTIFII, KLIFLHWYHHITVLLYSWYSY, MVAGGGWFMTMNYGVHAVMYS, FITLSQITQMLMGCVVNYLVF, and IFWSSLMYLSYLVLFCHFFFE.

It belongs to the ELO family. ELOVL6 subfamily. N-Glycosylated. In terms of tissue distribution, ubiquitous.

Its subcellular location is the endoplasmic reticulum membrane. The enzyme catalyses a very-long-chain acyl-CoA + malonyl-CoA + H(+) = a very-long-chain 3-oxoacyl-CoA + CO2 + CoA. It carries out the reaction hexadecanoyl-CoA + malonyl-CoA + H(+) = 3-oxooctadecanoyl-CoA + CO2 + CoA. It catalyses the reaction (9Z)-hexadecenoyl-CoA + malonyl-CoA + H(+) = 3-oxo-(11Z)-octadecenoyl-CoA + CO2 + CoA. The catalysed reaction is dodecanoyl-CoA + malonyl-CoA + H(+) = 3-oxotetradecanoyl-CoA + CO2 + CoA. The enzyme catalyses tetradecanoyl-CoA + malonyl-CoA + H(+) = 3-oxohexadecanoyl-CoA + CO2 + CoA. It carries out the reaction (9Z)-octadecenoyl-CoA + malonyl-CoA + H(+) = 3-oxo-(11Z)-eicosenoyl-CoA + CO2 + CoA. It catalyses the reaction (9Z,12Z)-octadecadienoyl-CoA + malonyl-CoA + H(+) = (11Z,14Z)-3-oxoicosa-11,14-dienoyl-CoA + CO2 + CoA. The catalysed reaction is (9Z,12Z,15Z)-octadecatrienoyl-CoA + malonyl-CoA + H(+) = (11Z,14Z,17Z)-3-oxoeicosatrienoyl-CoA + CO2 + CoA. It participates in lipid metabolism; fatty acid biosynthesis. Its activity is regulated as follows. The reaction is stimulated by the presence of HSD17B12, the enzyme catalyzing the second step of the elongation cycle. Catalyzes the first and rate-limiting reaction of the four reactions that constitute the long-chain fatty acids elongation cycle. This endoplasmic reticulum-bound enzymatic process allows the addition of 2 carbons to the chain of long- and very long-chain fatty acids (VLCFAs) per cycle. Condensing enzyme that elongates fatty acids with 12, 14 and 16 carbons with higher activity toward C16:0 acyl-CoAs. Catalyzes the synthesis of unsaturated C16 long chain fatty acids and, to a lesser extent, C18:0 and those with low desaturation degree. May participate in the production of saturated and monounsaturated VLCFAs of different chain lengths that are involved in multiple biological processes as precursors of membrane lipids and lipid mediators. This is Very long chain fatty acid elongase 6 from Homo sapiens (Human).